Reading from the N-terminus, the 1122-residue chain is Protein phosphatase 1 regulatory subunit 3A (1122 aa).

The disordered stretch occupies residues 32–58 (TFQPGFSPQPSRRGSDSSEDIYLDTPS). A phosphoserine; by GSK3 mark is found at serine 38 and serine 42. Residue serine 46 is modified to Phosphoserine; by PKA and ISPK. The residue at position 49 (serine 49) is a Phosphoserine. Threonine 56 is subject to Phosphothreonine. Residues 62 to 65 (RRVS) carry the PP1-binding motif motif. Serine 65 carries the post-translational modification Phosphoserine; by PKA. One can recognise a CBM21 domain in the interval 122–230 (QLQIQKAILE…NNNGTNYTFI (109 aa)). Disordered regions lie at residues 332 to 351 (STASRDERNTFSTDPVNFPN), 395 to 422 (SSGDDCTHQPSEETTSNMGEIKPSLGDT), 496 to 516 (CLKESTEEGSSKEDYYGNGKD), and 640 to 668 (GINSEDQDNSPQHKQSWNVLESQGKSREN). 2 stretches are compositionally biased toward basic and acidic residues: residues 395 to 405 (SSGDDCTHQPS) and 499 to 516 (ESTEEGSSKEDYYGNGKD). Residues 640–662 (GINSEDQDNSPQHKQSWNVLESQ) are compositionally biased toward polar residues. At serine 844 the chain carries Phosphoserine. A compositionally biased stretch (basic and acidic residues) spans 963 to 977 (IEKHPYPESKPEEVS). 2 disordered regions span residues 963 to 983 (IEKHPYPESKPEEVSRSSGIV) and 1025 to 1058 (RHENEGLVSSGQSLYTSGEKESDSSASTSLPVEE). 2 stretches are compositionally biased toward polar residues: residues 1031–1040 (LVSSGQSLYT) and 1048–1058 (SSASTSLPVEE). The helical transmembrane segment at 1078–1098 (YFLLFLIFLITVYHYDLMIGL) threads the bilayer.

Interacts with PPP1CC catalytic subunit of PP1, and associates with glycogen. In terms of processing, phosphorylation at Ser-46 by ISPK stimulates the dephosphorylation of glycogen synthase and phosphorylase kinase. In terms of tissue distribution, skeletal muscle and heart.

Its subcellular location is the membrane. In terms of biological role, seems to act as a glycogen-targeting subunit for PP1. PP1 is essential for cell division, and participates in the regulation of glycogen metabolism, muscle contractility and protein synthesis. Plays an important role in glycogen synthesis but is not essential for insulin activation of glycogen synthase. This is Protein phosphatase 1 regulatory subunit 3A (PPP1R3A) from Homo sapiens (Human).